Consider the following 316-residue polypeptide: Olfactory receptor 5AP2 (316 aa).

Over 1-34 (MRLMKEVRGRNQTEVTEFLLLGLSDNPDLQGVLF) the chain is Extracellular. An N-linked (GlcNAc...) asparagine glycan is attached at Asn-11. Residues 35-55 (ALFLLIYMANMVGNLGMIVLI) form a helical membrane-spanning segment. Residue Lys-56 is a topological domain, cytoplasmic. Residues 57–77 (IDLCLHTPMYFFLSSLSFVDA) traverse the membrane as a helical segment. Over 78 to 104 (SYSSSVTPKMLVNLMAENKAISFHGCA) the chain is Extracellular. A disulfide bridge connects residues Cys-103 and Cys-195. A helical membrane pass occupies residues 105–125 (AQFYFFGSFLGTECFLLAMMA). Topologically, residues 126 to 135 (YDRYAAIWNP) are cytoplasmic. A helical membrane pass occupies residues 136 to 156 (LLYPVLVSGRICFLLIATSFL). Topologically, residues 157–210 (AGCGNAAIHTGMTFRLSFCGSNRINHFYCDTPPLLKLSCSDTHFNGIVIMAFSS) are extracellular. A helical transmembrane segment spans residues 211–231 (FIVISCVMIVLISYLCIFIAV). Topologically, residues 232–245 (LKMPSLEGRHKAFS) are cytoplasmic. The helical transmembrane segment at 246–266 (TCASYLMAVTIFFGTILFMYL) threads the bilayer. At 267–278 (RPTSSYSMEQDK) the chain is on the extracellular side. Residues 279 to 299 (VVSVFYTVIIPVLNPLIYSLK) traverse the membrane as a helical segment. The Cytoplasmic segment spans residues 300 to 316 (NKDVKKALKKILWKHIL).

The protein belongs to the G-protein coupled receptor 1 family.

It is found in the cell membrane. Its function is as follows. Odorant receptor. This chain is Olfactory receptor 5AP2, found in Homo sapiens (Human).